A 360-amino-acid chain; its full sequence is Photosystem II protein D1 2 (360 aa).

Transmembrane regions (helical) follow at residues 29 to 46 (YIGWFGVLMIPTLLAATT), 118 to 133 (HFLTGVFCYLGREWEL), and 142 to 156 (WICLAFSAPVAAATA). His-118 contributes to the chlorophyll a binding site. Tyr-126 serves as a coordination point for pheophytin a. [CaMn4O5] cluster is bound by residues Asp-170 and Glu-189. The helical transmembrane segment at 197-218 (FHMLGVAGVFGGSLFSAMHGSL) threads the bilayer. His-198 serves as a coordination point for chlorophyll a. Residues His-215 and 264–265 (SF) each bind a quinone. His-215 contributes to the Fe cation binding site. His-272 lines the Fe cation pocket. Residues 274–288 (FLAAWPVIGIWFTAL) traverse the membrane as a helical segment. [CaMn4O5] cluster contacts are provided by His-332, Glu-333, Asp-342, and Ala-344. A propeptide spanning residues 345-360 (AGEVAPVAISAPAING) is cleaved from the precursor.

The protein belongs to the reaction center PufL/M/PsbA/D family. As to quaternary structure, PSII is composed of 1 copy each of membrane proteins PsbA, PsbB, PsbC, PsbD, PsbE, PsbF, PsbH, PsbI, PsbJ, PsbK, PsbL, PsbM, PsbT, PsbX, PsbY, PsbZ, Psb30/Ycf12, peripheral proteins PsbO, CyanoQ (PsbQ), PsbU, PsbV and a large number of cofactors. It forms dimeric complexes. The D1/D2 heterodimer binds P680, chlorophylls that are the primary electron donor of PSII, and subsequent electron acceptors. It shares a non-heme iron and each subunit binds pheophytin, quinone, additional chlorophylls, carotenoids and lipids. D1 provides most of the ligands for the Mn4-Ca-O5 cluster of the oxygen-evolving complex (OEC). There is also a Cl(-1) ion associated with D1 and D2, which is required for oxygen evolution. The PSII complex binds additional chlorophylls, carotenoids and specific lipids. is required as a cofactor. Post-translationally, tyr-161 forms a radical intermediate that is referred to as redox-active TyrZ, YZ or Y-Z. In terms of processing, C-terminally processed by CtpA; processing is essential to allow assembly of the oxygen-evolving complex and thus photosynthetic growth.

It localises to the cellular thylakoid membrane. It catalyses the reaction 2 a plastoquinone + 4 hnu + 2 H2O = 2 a plastoquinol + O2. Its function is as follows. Photosystem II (PSII) is a light-driven water:plastoquinone oxidoreductase that uses light energy to abstract electrons from H(2)O, generating O(2) and a proton gradient subsequently used for ATP formation. It consists of a core antenna complex that captures photons, and an electron transfer chain that converts photonic excitation into a charge separation. The D1/D2 (PsbA/PsbD) reaction center heterodimer binds P680, the primary electron donor of PSII as well as several subsequent electron acceptors. The sequence is that of Photosystem II protein D1 2 from Nostoc sp. (strain PCC 7120 / SAG 25.82 / UTEX 2576).